Here is a 344-residue protein sequence, read N- to C-terminus: MSDRLISATAQSEDNDLELSLRPRRLSEYIGQQKAKETISIFVEAARQRGEPLDHVLLFGPPGLGKTTLSNIIANEMAVNIRTTSGPAIERQGDLAAILTNLAPGDVLFIDEIHRLSKAVEEILYPAMEDFALDIVLGKGPGARSIRLDLPKFTLIGATTRAGMLASPLRDRFGIISRLEFYNNEDLTRIVTRAADILKVVIDRSGAEEIARRSRGTPRVANRLLKRVRDYAQVRAQGDITADVAAEALEFFEVDPLGLDHTDRRLLSSIIEKFNGGPVGLDTIAAAISEETDTVEDVLEPFLMQMGLITRTPRGRVVTPQAYKHLGIPMNRETQKGLEQNSLF.

Residues 1-182 are large ATPase domain (RuvB-L); that stretch reads MSDRLISATA…FGIISRLEFY (182 aa). Residues L21, R22, G63, K66, T67, T68, 129-131, R172, Y182, and R219 each bind ATP; that span reads EDF. A Mg(2+)-binding site is contributed by T67. The interval 183–253 is small ATPAse domain (RuvB-S); that stretch reads NNEDLTRIVT…VAAEALEFFE (71 aa). A head domain (RuvB-H) region spans residues 256–344; sequence PLGLDHTDRR…QKGLEQNSLF (89 aa). Residues R311 and R316 each coordinate DNA.

Belongs to the RuvB family. As to quaternary structure, homohexamer. Forms an RuvA(8)-RuvB(12)-Holliday junction (HJ) complex. HJ DNA is sandwiched between 2 RuvA tetramers; dsDNA enters through RuvA and exits via RuvB. An RuvB hexamer assembles on each DNA strand where it exits the tetramer. Each RuvB hexamer is contacted by two RuvA subunits (via domain III) on 2 adjacent RuvB subunits; this complex drives branch migration. In the full resolvosome a probable DNA-RuvA(4)-RuvB(12)-RuvC(2) complex forms which resolves the HJ.

Its subcellular location is the cytoplasm. It carries out the reaction ATP + H2O = ADP + phosphate + H(+). Functionally, the RuvA-RuvB-RuvC complex processes Holliday junction (HJ) DNA during genetic recombination and DNA repair, while the RuvA-RuvB complex plays an important role in the rescue of blocked DNA replication forks via replication fork reversal (RFR). RuvA specifically binds to HJ cruciform DNA, conferring on it an open structure. The RuvB hexamer acts as an ATP-dependent pump, pulling dsDNA into and through the RuvAB complex. RuvB forms 2 homohexamers on either side of HJ DNA bound by 1 or 2 RuvA tetramers; 4 subunits per hexamer contact DNA at a time. Coordinated motions by a converter formed by DNA-disengaged RuvB subunits stimulates ATP hydrolysis and nucleotide exchange. Immobilization of the converter enables RuvB to convert the ATP-contained energy into a lever motion, pulling 2 nucleotides of DNA out of the RuvA tetramer per ATP hydrolyzed, thus driving DNA branch migration. The RuvB motors rotate together with the DNA substrate, which together with the progressing nucleotide cycle form the mechanistic basis for DNA recombination by continuous HJ branch migration. Branch migration allows RuvC to scan DNA until it finds its consensus sequence, where it cleaves and resolves cruciform DNA. The polypeptide is Holliday junction branch migration complex subunit RuvB (Desulforamulus reducens (strain ATCC BAA-1160 / DSM 100696 / MI-1) (Desulfotomaculum reducens)).